The primary structure comprises 980 residues: GPI inositol-deacylase (980 aa).

The Cytoplasmic portion of the chain corresponds to 1 to 7 (MFMFRNC). A helical membrane pass occupies residues 8-28 (AVLLVIGSICCFIYGLFRLHV). Over 29–628 (EVEPNACRMT…EYSYSSALSR (600 aa)) the chain is Lumenal. Serine 170 is a catalytic residue. N-linked (GlcNAc...) asparagine glycans are attached at residues asparagine 427, asparagine 517, and asparagine 596. The chain crosses the membrane as a helical span at residues 629-649 (LVLEFYGWLPAHLVCVLLIVL). Residues 650-709 (RKQVETFYDVGTFRSLRPYVGYLQYTSLYIVTACRLLKKLIISSRVFPEPEPLDYSINVS) lie on the Cytoplasmic side of the membrane. A helical membrane pass occupies residues 710–730 (IVIHCAAIALSLLATLGTWLA). Residues 731 to 774 (LTLYGNAFYRLALRITRLSQATSNVMISIMTHLPITYGILTIAT) lie on the Lumenal side of the membrane. A helical transmembrane segment spans residues 775–795 (AMGTCSGVGLLLAFVFYFLML). Over 796–867 (SNAYKDYLED…CVGLQNFSFH (72 aa)) the chain is Cytoplasmic. Residues 821–853 (AVTEQEDATEEQNEEQNALKQNDEQKQQQQEEE) form a disordered region. A compositionally biased stretch (acidic residues) spans 824–834 (EQEDATEEQNE). A helical membrane pass occupies residues 868-888 (VTLLLMLFVQLLLNAPSSLAW). The Lumenal segment spans residues 889 to 895 (LRSRRHG). Residues 896–916 (INLPDPSLYPSIVVLASLSLL) traverse the membrane as a helical segment. Over 917-929 (LQLRAPQKCQGYW) the chain is Cytoplasmic. Residues 930–950 (MLSIAFYILAGVVLLYCQAAI) traverse the membrane as a helical segment. Topologically, residues 951 to 954 (YRLT) are lumenal. Residues 955–975 (YVIAGAFALLSAHQSLWILWG) form a helical membrane-spanning segment. At 976–980 (RVSRV) the chain is on the cytoplasmic side.

It belongs to the GPI inositol-deacylase family.

It is found in the endoplasmic reticulum membrane. Its function is as follows. Involved in inositol deacylation of GPI-anchored proteins. This chain is GPI inositol-deacylase, found in Drosophila melanogaster (Fruit fly).